The chain runs to 459 residues: Bifunctional protein GlmU (459 aa).

The pyrophosphorylase stretch occupies residues 1 to 229 (MSNFAIILAA…FDESLGVNDR (229 aa)). UDP-N-acetyl-alpha-D-glucosamine contacts are provided by residues 8-11 (LAAG), Lys22, Gln72, and 77-78 (GT). Residue Asp102 participates in Mg(2+) binding. The UDP-N-acetyl-alpha-D-glucosamine site is built by Gly139, Glu154, Asn169, and Asn227. Asn227 lines the Mg(2+) pocket. A linker region spans residues 230 to 250 (VALATAESVMRRRINHKHMVN). The interval 251 to 459 (GVSFVNPEAT…TRLPHHPKNQ (209 aa)) is N-acetyltransferase. UDP-N-acetyl-alpha-D-glucosamine contacts are provided by Arg332 and Lys350. The active-site Proton acceptor is the His362. UDP-N-acetyl-alpha-D-glucosamine-binding residues include Tyr365 and Asn376. Residues Ala379, 385-386 (NY), Ser404, Ala422, and Arg439 contribute to the acetyl-CoA site.

In the N-terminal section; belongs to the N-acetylglucosamine-1-phosphate uridyltransferase family. It in the C-terminal section; belongs to the transferase hexapeptide repeat family. Homotrimer. Mg(2+) is required as a cofactor.

The protein resides in the cytoplasm. It catalyses the reaction alpha-D-glucosamine 1-phosphate + acetyl-CoA = N-acetyl-alpha-D-glucosamine 1-phosphate + CoA + H(+). The catalysed reaction is N-acetyl-alpha-D-glucosamine 1-phosphate + UTP + H(+) = UDP-N-acetyl-alpha-D-glucosamine + diphosphate. It participates in nucleotide-sugar biosynthesis; UDP-N-acetyl-alpha-D-glucosamine biosynthesis; N-acetyl-alpha-D-glucosamine 1-phosphate from alpha-D-glucosamine 6-phosphate (route II): step 2/2. The protein operates within nucleotide-sugar biosynthesis; UDP-N-acetyl-alpha-D-glucosamine biosynthesis; UDP-N-acetyl-alpha-D-glucosamine from N-acetyl-alpha-D-glucosamine 1-phosphate: step 1/1. Its pathway is bacterial outer membrane biogenesis; LPS lipid A biosynthesis. Its function is as follows. Catalyzes the last two sequential reactions in the de novo biosynthetic pathway for UDP-N-acetylglucosamine (UDP-GlcNAc). The C-terminal domain catalyzes the transfer of acetyl group from acetyl coenzyme A to glucosamine-1-phosphate (GlcN-1-P) to produce N-acetylglucosamine-1-phosphate (GlcNAc-1-P), which is converted into UDP-GlcNAc by the transfer of uridine 5-monophosphate (from uridine 5-triphosphate), a reaction catalyzed by the N-terminal domain. The protein is Bifunctional protein GlmU of Streptococcus pneumoniae (strain 70585).